The following is a 401-amino-acid chain: Mu-type opioid receptor (401 aa).

Residues 1–69 (MDSSADPRNA…CPPTGSPSMV (69 aa)) lie on the Extracellular side of the membrane. Residues Asn9, Asn12, Asn34, Asn41, and Asn49 are each glycosylated (N-linked (GlcNAc...) asparagine). The helical transmembrane segment at 70–94 (TAITIMALYSIVCVVGLFGNFLVMY) threads the bilayer. Residues 95–107 (VIVRYTKMKTATN) lie on the Cytoplasmic side of the membrane. The chain crosses the membrane as a helical span at residues 108–132 (IYIFNLALADALATSTLPFQSVNYL). Residues 133–143 (MGTWPFGTILC) lie on the Extracellular side of the membrane. Cys143 and Cys220 are joined by a disulfide. A helical transmembrane segment spans residues 144-166 (KIVISIDYYNMFTSIFTLCTMSV). At 167–186 (DRYIAVCHPVKALDFRTPRN) the chain is on the cytoplasmic side. Tyr169 carries the post-translational modification Phosphotyrosine. The chain crosses the membrane as a helical span at residues 187–208 (AKIINVCNWILSSAIGLPVMFM). Residues 209–231 (ATTKYRNGSIDCALTFSHPTWYW) are Extracellular-facing. A helical transmembrane segment spans residues 232–256 (ENLLKICVFIFAFIMPVLIITVCYG). Over 257–280 (LMILRLKSVRMLSGSKEKDRNLRR) the chain is Cytoplasmic. Residues 281-307 (ITRMVLVVVAVFIVCWTPIHIYVIIKA) traverse the membrane as a helical segment. Topologically, residues 308-315 (LITIPETT) are extracellular. A helical transmembrane segment spans residues 316–339 (FQTVSWHFCIALGYTNSCLNPVLY). The NPxxY; plays a role in stabilizing the activated conformation of the receptor signature appears at 335–339 (NPVLY). Residues 340–401 (AFLDENFKRC…NLEAETAPLP (62 aa)) lie on the Cytoplasmic side of the membrane. Cys354 is lipidated: S-palmitoyl cysteine. Residues 365 to 385 (NSARIRQNTRDHPSTANTVDR) are disordered. Ser366 carries the post-translational modification Phosphoserine. Thr373 carries the post-translational modification Phosphothreonine. Ser378 bears the Phosphoserine mark. A Phosphothreonine modification is found at Thr397.

Belongs to the G-protein coupled receptor 1 family. Forms homooligomers and heterooligomers with other GPCRs, such as OPRD1, OPRK1, OPRL1, NPFFR2, ADRA2A, SSTR2, CNR1 and CCR5 (probably in dimeric forms). Interacts with heterotrimeric G proteins; interaction with a heterotrimeric complex containing GNAI1, GNB1 and GNG2 stabilizes the active conformation of the receptor and increases its affinity for endomorphin-2, the synthetic opioid peptide DAMGO and for morphinan agonists. Interacts with PPL; the interaction disrupts agonist-mediated G-protein activation. Interacts (via C-terminus) with DNAJB4 (via C-terminus). Interacts with calmodulin; the interaction inhibits the constitutive activity of OPRM1; it abolishes basal and attenuates agonist-stimulated G-protein coupling. Interacts with FLNA, PLD2, RANBP9 and WLS and GPM6A. Interacts with RTP4. Interacts with SYP and GNAS. Interacts with RGS9, RGS17, RGS20, RGS4, PPP1R9B and HINT1. Phosphorylated. Differentially phosphorylated in basal and agonist-induced conditions. Agonist-mediated phosphorylation modulates receptor internalization. Phosphorylated by GRK2 in a agonist-dependent manner. Phosphorylation at Tyr-169 requires receptor activation, is dependent on non-receptor protein tyrosine kinase Src and results in a decrease in agonist efficacy by reducing G-protein coupling efficiency. Phosphorylated on tyrosine residues; the phosphorylation is involved in agonist-induced G-protein-independent receptor down-regulation. Phosphorylation at Ser-378 is involved in G-protein-dependent but not beta-arrestin-dependent activation of the ERK pathway. In terms of processing, ubiquitinated. A basal ubiquitination seems not to be related to degradation. Ubiquitination is increased upon formation of OPRM1:OPRD1 oligomers leading to proteasomal degradation; the ubiquitination is diminished by RTP4.

It is found in the cell membrane. The protein localises to the cell projection. The protein resides in the axon. Its subcellular location is the perikaryon. It localises to the dendrite. It is found in the endosome. Functionally, receptor for endogenous opioids such as beta-endorphin and endomorphin. Receptor for natural and synthetic opioids including morphine, heroin, DAMGO, fentanyl, etorphine, buprenorphin and methadone. Also activated by enkephalin peptides, such as Met-enkephalin or Met-enkephalin-Arg-Phe, with higher affinity for Met-enkephalin-Arg-Phe. Agonist binding to the receptor induces coupling to an inactive GDP-bound heterotrimeric G-protein complex and subsequent exchange of GDP for GTP in the G-protein alpha subunit leading to dissociation of the G-protein complex with the free GTP-bound G-protein alpha and the G-protein beta-gamma dimer activating downstream cellular effectors. The agonist- and cell type-specific activity is predominantly coupled to pertussis toxin-sensitive G(i) and G(o) G alpha proteins, GNAI1, GNAI2, GNAI3 and GNAO1, and to a lesser extent to pertussis toxin-insensitive G alpha proteins GNAZ and GNA15. They mediate an array of downstream cellular responses, including inhibition of adenylate cyclase activity and both N-type and L-type calcium channels, activation of inward rectifying potassium channels, mitogen-activated protein kinase (MAPK), phospholipase C (PLC), phosphoinositide/protein kinase (PKC), phosphoinositide 3-kinase (PI3K) and regulation of NF-kappa-B. Also couples to adenylate cyclase stimulatory G alpha proteins. The selective temporal coupling to G-proteins and subsequent signaling can be regulated by RGSZ proteins, such as RGS9, RGS17 and RGS4. Phosphorylation by members of the GPRK subfamily of Ser/Thr protein kinases and association with beta-arrestins is involved in short-term receptor desensitization. Beta-arrestins associate with the GPRK-phosphorylated receptor and uncouple it from the G-protein thus terminating signal transduction. The phosphorylated receptor is internalized through endocytosis via clathrin-coated pits which involves beta-arrestins. The activation of the ERK pathway occurs either in a G-protein-dependent or a beta-arrestin-dependent manner and is regulated by agonist-specific receptor phosphorylation. Acts as a class A G-protein coupled receptor (GPCR) which dissociates from beta-arrestin at or near the plasma membrane and undergoes rapid recycling. Receptor down-regulation pathways are varying with the agonist and occur dependent or independent of G-protein coupling. Endogenous ligands induce rapid desensitization, endocytosis and recycling. Heterooligomerization with other GPCRs can modulate agonist binding, signaling and trafficking properties. Involved in neurogenesis. This Sus scrofa (Pig) protein is Mu-type opioid receptor (OPRM1).